Here is a 309-residue protein sequence, read N- to C-terminus: Taste receptor type 2 member 43 (309 aa).

M1 is a topological domain (extracellular). The helical transmembrane segment at 2-22 (ITFLPIIFSSLVVVTFVIGNF) threads the bilayer. Residues 23–46 (ANGFIALVNSIEWFKRQKISFADQ) lie on the Cytoplasmic side of the membrane. A helical membrane pass occupies residues 47–67 (ILTALAVSRVGLLWVLLLNWY). The Extracellular segment spans residues 68–86 (STVLNPAFNSVEVRTTAYN). A helical transmembrane segment spans residues 87–107 (IWAVINHFSNWLATSLSIFYL). At 108-126 (LKIANFSNFIFLHLKRRVK) the chain is on the cytoplasmic side. A helical membrane pass occupies residues 127 to 147 (SVILVMLLGPLLFLACHLFVI). Residues 148-178 (NMNEIVRTKEFEGNMTWKIKLKSAMYFSNMT) lie on the Extracellular side of the membrane. N161 and N176 each carry an N-linked (GlcNAc...) asparagine glycan. A helical membrane pass occupies residues 179–199 (VTMVANLVPFTLTLLSFLLLI). The Cytoplasmic portion of the chain corresponds to 200-229 (CSLCKHLKKMQLHGKGSQDPSTKVHIKVLQ). The chain crosses the membrane as a helical span at residues 230–250 (TVISFLLLCAIYFLSIMISVW). Residues 251–259 (SFGSLKNKP) lie on the Extracellular side of the membrane. A helical transmembrane segment spans residues 260-280 (VFMFCKAMRFSYPSIHPFILI). Residues 281 to 309 (WGNKKLKQTFLSVFWQMRYWVKGEKTSSP) are Cytoplasmic-facing.

This sequence belongs to the G-protein coupled receptor T2R family.

The protein resides in the membrane. The protein localises to the cell projection. Its subcellular location is the cilium membrane. In terms of biological role, gustducin-coupled receptor immplicated in the perception of bitter compounds in the oral cavity and the gastrointestinal tract. Signals through PLCB2 and the calcium-regulated cation channel TRPM5. Activated by the sulfonyl amide sweeteners saccharin and acesulfame K. In airway epithelial cells, binding of bitter compounds increases the intracellular calcium ion concentration and stimulates ciliary beat frequency. May act as chemosensory receptors in airway epithelial cells to detect and eliminate potential noxious agents from the airways. This chain is Taste receptor type 2 member 43 (TAS2R43), found in Pan troglodytes (Chimpanzee).